A 380-amino-acid chain; its full sequence is Endo-polygalacturonase (380 aa).

A signal peptide spans 1–17; sequence MVHILSSALSLLRLGAA. Residues 18–42 constitute a propeptide that is removed on maturation; it reads VSAAPAPAPTAAPNVADALAAVEKR. Cysteines 46 and 64 form a disulfide. PbH1 repeat units follow at residues 178–207, 208–229, 230–250, 259–280, 288–310, and 322–343; these read ASGL…DVGS, STDI…AINS, GTGI…SIGS, VSDV…RIKT, VSGV…VIEQ, and TSGV…SSSA. Aspartate 222 (proton donor) is an active-site residue. A disulfide bridge connects residues cysteine 224 and cysteine 240. The active site involves histidine 244. Cysteine 350 and cysteine 353 form a disulfide bridge. N-linked (GlcNAc...) asparagine glycosylation is present at asparagine 361. An intrachain disulfide couples cysteine 371 to cysteine 380.

The protein belongs to the glycosyl hydrolase 28 family.

The protein resides in the secreted. It catalyses the reaction (1,4-alpha-D-galacturonosyl)n+m + H2O = (1,4-alpha-D-galacturonosyl)n + (1,4-alpha-D-galacturonosyl)m.. This chain is Endo-polygalacturonase (PG1), found in Sclerotinia sclerotiorum (White mold).